A 109-amino-acid polypeptide reads, in one-letter code: Iron-sulfur cluster assembly protein CyaY (109 aa).

Belongs to the frataxin family.

Its function is as follows. Involved in iron-sulfur (Fe-S) cluster assembly. May act as a regulator of Fe-S biogenesis. In Shewanella putrefaciens (strain CN-32 / ATCC BAA-453), this protein is Iron-sulfur cluster assembly protein CyaY.